We begin with the raw amino-acid sequence, 754 residues long: Carbon catabolite repressor protein 4 homolog 6 (754 aa).

Disordered regions lie at residues 34–65 (PYRG…DQFV) and 85–176 (EPYR…KTPP). Residues 50-61 (FSDRPYNDDAGR) are compositionally biased toward basic and acidic residues. 2 stretches are compositionally biased toward polar residues: residues 96–106 (QRQQPPFNQNY) and 116–133 (GQWQ…NQNY). Positions 162–171 (KPSDYREWEY) are enriched in basic and acidic residues. Glu237 contributes to the Mg(2+) binding site. 2 disordered regions span residues 404–431 (VSAE…QGQV) and 494–558 (IENR…DQDI). 3 stretches are compositionally biased toward polar residues: residues 415-431 (NYTT…QGQV), 503-525 (GNLS…QHAS), and 534-545 (DRSVSSGLSETE).

The protein belongs to the CCR4/nocturin family. Component of the CCR4-NOT complex, at least composed of CRR4 and CAF1 proteins. Mg(2+) serves as cofactor.

The protein resides in the nucleus. Its subcellular location is the cytoplasm. The catalysed reaction is Exonucleolytic cleavage of poly(A) to 5'-AMP.. Functionally, acts as a catalytic component of the CCR4-NOT core complex, which in the nucleus seems to be a general transcription factor, and in the cytoplasm the major mRNA deadenylase involved in mRNA turnover. This is Carbon catabolite repressor protein 4 homolog 6 (CCR4-6) from Arabidopsis thaliana (Mouse-ear cress).